The chain runs to 164 residues: Putative HTH-type transcriptional regulator ORF2 (164 aa).

The HTH rrf2-type domain occupies 2–131 (RLTTKGRYAV…SGISLADLVA (130 aa)).

The protein is Putative HTH-type transcriptional regulator ORF2 of Azotobacter vinelandii.